Reading from the N-terminus, the 178-residue chain is Inorganic pyrophosphatase (178 aa).

Substrate is bound by residues Lys30, Arg44, and Tyr56. Mg(2+) contacts are provided by Asp66, Asp71, and Asp103. Residue Tyr140 participates in substrate binding.

Belongs to the PPase family. In terms of assembly, homohexamer. Mg(2+) serves as cofactor.

It is found in the cytoplasm. It catalyses the reaction diphosphate + H2O = 2 phosphate + H(+). Catalyzes the hydrolysis of inorganic pyrophosphate (PPi) forming two phosphate ions. The protein is Inorganic pyrophosphatase of Pyrococcus furiosus (strain ATCC 43587 / DSM 3638 / JCM 8422 / Vc1).